The following is a 90-amino-acid chain: YcgL domain-containing protein YpsIP31758_2009 (90 aa).

The YcgL domain maps to Met1–Leu85.

This is YcgL domain-containing protein YpsIP31758_2009 from Yersinia pseudotuberculosis serotype O:1b (strain IP 31758).